Consider the following 619-residue polypeptide: MPKLRSATSTEGRNMAGARALWRATGVKDNDFGKPIIAIANSFTQFVPGHVHLKDMGSLVAGAIEEAGGIAKEFNTIAVDDGIAMGHGGMLYSLPSRELIADSVEYMVNAHCADALVCISNCDKITPGMLMAALRLNIPVVFVSGGPMEAGKTKLSDKLIKLDLVDAMVAAADSSVSDEDSAKIERSACPTCGSCSGMFTANSMNCLTEALGLSLPGNGSMLATHSDRRELFLEAGRRVMALTKRYYEQDDVSALPRNIASFKAFENAMALDIAMGGSSNTVLHLLAAAQEADVAFTMDDIDRMSRQVPHLCKVAPSTAKYHMEDVHRAGGVMGILGELDRAGLLHTDVPHVAADAGGNLKSVLAKYDVMQTQDDKVKQFFMAGPAGIPTTKAFSQDCRWPSLDDDRREGCIRSREFAFSQEGGLAVLSGNLADNGCIVKTAGVDESNLTFTGSARVYESQDDAVAGILGGEVVAGDVVVIRYEGPKGGPGMQEMLYPTSYLKSRGLGKACALITDGRFSGGTSGLSIGHVSPEAAAGGTIALIENGDRIEIDIPKRSIKLAVSDAELAARRETMLARGPMAWKPLSRQRYVSMALKAYAMLATSADKGAVRDRSKLED.

Residue Asp-81 coordinates Mg(2+). Cys-122 contacts [2Fe-2S] cluster. Asp-123 and Lys-124 together coordinate Mg(2+). N6-carboxylysine is present on Lys-124. Residue Cys-195 participates in [2Fe-2S] cluster binding. Position 494 (Glu-494) interacts with Mg(2+). Ser-520 serves as the catalytic Proton acceptor.

The protein belongs to the IlvD/Edd family. Homodimer. It depends on [2Fe-2S] cluster as a cofactor. The cofactor is Mg(2+).

The enzyme catalyses (2R)-2,3-dihydroxy-3-methylbutanoate = 3-methyl-2-oxobutanoate + H2O. It catalyses the reaction (2R,3R)-2,3-dihydroxy-3-methylpentanoate = (S)-3-methyl-2-oxopentanoate + H2O. It participates in amino-acid biosynthesis; L-isoleucine biosynthesis; L-isoleucine from 2-oxobutanoate: step 3/4. Its pathway is amino-acid biosynthesis; L-valine biosynthesis; L-valine from pyruvate: step 3/4. Its function is as follows. Functions in the biosynthesis of branched-chain amino acids. Catalyzes the dehydration of (2R,3R)-2,3-dihydroxy-3-methylpentanoate (2,3-dihydroxy-3-methylvalerate) into 2-oxo-3-methylpentanoate (2-oxo-3-methylvalerate) and of (2R)-2,3-dihydroxy-3-methylbutanoate (2,3-dihydroxyisovalerate) into 2-oxo-3-methylbutanoate (2-oxoisovalerate), the penultimate precursor to L-isoleucine and L-valine, respectively. The chain is Dihydroxy-acid dehydratase from Shewanella sp. (strain MR-7).